A 253-amino-acid polypeptide reads, in one-letter code: Demethylmenaquinone methyltransferase (253 aa).

Residues T75, D96, and 124-125 (DA) contribute to the S-adenosyl-L-methionine site.

Belongs to the class I-like SAM-binding methyltransferase superfamily. MenG/UbiE family.

The enzyme catalyses a 2-demethylmenaquinol + S-adenosyl-L-methionine = a menaquinol + S-adenosyl-L-homocysteine + H(+). It participates in quinol/quinone metabolism; menaquinone biosynthesis; menaquinol from 1,4-dihydroxy-2-naphthoate: step 2/2. In terms of biological role, methyltransferase required for the conversion of demethylmenaquinol (DMKH2) to menaquinol (MKH2). In Desulfitobacterium hafniense (strain Y51), this protein is Demethylmenaquinone methyltransferase.